Here is a 477-residue protein sequence, read N- to C-terminus: tRNA(Ile)-lysidine synthase (477 aa).

Position 36–41 (36–41 (SGGADS)) interacts with ATP.

It belongs to the tRNA(Ile)-lysidine synthase family.

It localises to the cytoplasm. It catalyses the reaction cytidine(34) in tRNA(Ile2) + L-lysine + ATP = lysidine(34) in tRNA(Ile2) + AMP + diphosphate + H(+). Functionally, ligates lysine onto the cytidine present at position 34 of the AUA codon-specific tRNA(Ile) that contains the anticodon CAU, in an ATP-dependent manner. Cytidine is converted to lysidine, thus changing the amino acid specificity of the tRNA from methionine to isoleucine. This is tRNA(Ile)-lysidine synthase from Treponema pallidum (strain Nichols).